Consider the following 215-residue polypeptide: UPF0502 protein YceH (215 aa).

The residue at position 80 (Lys-80) is an N6-acetyllysine.

Belongs to the UPF0502 family.

The sequence is that of UPF0502 protein YceH from Escherichia coli O45:K1 (strain S88 / ExPEC).